We begin with the raw amino-acid sequence, 129 residues long: Small ribosomal subunit protein uS11 (129 aa).

It belongs to the universal ribosomal protein uS11 family. In terms of assembly, part of the 30S ribosomal subunit. Interacts with proteins S7 and S18. Binds to IF-3.

Located on the platform of the 30S subunit, it bridges several disparate RNA helices of the 16S rRNA. Forms part of the Shine-Dalgarno cleft in the 70S ribosome. This Desulfovibrio desulfuricans (strain ATCC 27774 / DSM 6949 / MB) protein is Small ribosomal subunit protein uS11.